The primary structure comprises 173 residues: Pathogenesis-related protein 1C (173 aa).

The first 20 residues, 1 to 20, serve as a signal peptide directing secretion; sequence MSTSAVLFLLLAVFAAGASA.

This sequence belongs to the thaumatin family.

The polypeptide is Pathogenesis-related protein 1C (Hordeum vulgare (Barley)).